Here is a 124-residue protein sequence, read N- to C-terminus: Small ribosomal subunit protein uS13 (124 aa).

The disordered stretch occupies residues 99–124 (PCRGQKTKTNARTCKGPKKTVANKKK). Residues 113–124 (KGPKKTVANKKK) are compositionally biased toward basic residues.

It belongs to the universal ribosomal protein uS13 family. In terms of assembly, part of the 30S ribosomal subunit. Forms a loose heterodimer with protein S19. Forms two bridges to the 50S subunit in the 70S ribosome.

In terms of biological role, located at the top of the head of the 30S subunit, it contacts several helices of the 16S rRNA. In the 70S ribosome it contacts the 23S rRNA (bridge B1a) and protein L5 of the 50S subunit (bridge B1b), connecting the 2 subunits; these bridges are implicated in subunit movement. Contacts the tRNAs in the A and P-sites. This Lachnospira eligens (strain ATCC 27750 / DSM 3376 / VPI C15-48 / C15-B4) (Eubacterium eligens) protein is Small ribosomal subunit protein uS13.